The following is a 176-amino-acid chain: MAEEESKPVPAEKEESLVQAGKVSQWLTENGFDHEFLAPDKNGVEIIKVSADFLLPTATALYAYGFNYLQCQGGIDLGPGQELVSMYHLIKVGDNSDRPEEVRVKVFLPRENPVVPSVYWIWKTADWQERESYDMFGIIYEGHPNLKRLLMPEDWVGWPLRKDYISPDFYELQDAY.

It belongs to the complex I 30 kDa subunit family. As to quaternary structure, NDH-1 can be composed of about 15 different subunits; different subcomplexes with different compositions have been identified which probably have different functions.

The protein localises to the cellular thylakoid membrane. The catalysed reaction is a plastoquinone + NADH + (n+1) H(+)(in) = a plastoquinol + NAD(+) + n H(+)(out). It catalyses the reaction a plastoquinone + NADPH + (n+1) H(+)(in) = a plastoquinol + NADP(+) + n H(+)(out). NDH-1 shuttles electrons from an unknown electron donor, via FMN and iron-sulfur (Fe-S) centers, to quinones in the respiratory and/or the photosynthetic chain. The immediate electron acceptor for the enzyme in this species is believed to be plastoquinone. Couples the redox reaction to proton translocation, and thus conserves the redox energy in a proton gradient. Cyanobacterial NDH-1 also plays a role in inorganic carbon-concentration. In Nostoc punctiforme (strain ATCC 29133 / PCC 73102), this protein is NAD(P)H-quinone oxidoreductase subunit J.